The sequence spans 551 residues: Cation/acetate symporter ActP (551 aa).

Helical transmembrane passes span 34–54 (IEAI…TYWA), 77–97 (GLAI…SALV), 104–124 (GLIY…LIAE), 150–170 (LSAC…MVGA), 184–204 (VAVV…GMLA), 207–227 (WVQI…ALMV), 263–283 (ISAL…PHIL), 304–324 (GFIG…ILLV), 356–376 (FFLG…VAGL), 406–426 (VSKI…ILFE), 430–450 (IAFM…PIIF), 469–489 (LGLL…VTIL), and 498–518 (YEYP…FFSI).

The protein belongs to the sodium:solute symporter (SSF) (TC 2.A.21) family.

The protein localises to the cell inner membrane. Functionally, transports acetate. This Yersinia enterocolitica serotype O:8 / biotype 1B (strain NCTC 13174 / 8081) protein is Cation/acetate symporter ActP.